Consider the following 879-residue polypeptide: Band 4.1-like protein 1 (879 aa).

The interval 1-64 is disordered; that stretch reads MTTETGPDSE…RPAEQSLDME (64 aa). A compositionally biased stretch (low complexity) spans 17–35; that stretch reads ETPQQPEAAAAVTTPVTPA. Thr30 bears the Phosphothreonine mark. Over residues 38 to 50 the composition is skewed to basic and acidic residues; that stretch reads SHPETNSNEKHLT. Ser75 is modified (phosphoserine). A Phosphothreonine modification is found at Thr79. Positions 97-378 constitute an FERM domain; the sequence is ATCRVTLLDA…EHHTFFRLVS (282 aa). Phosphotyrosine is present on Tyr343. Residues Ser378, Ser430, Ser437, Ser461, and Ser466 each carry the phosphoserine modification. A disordered region spans residues 428-501; that stretch reads SRSLDGAEFS…HKQEFLDKPE (74 aa). The span at 444-501 shows a compositional bias: basic and acidic residues; sequence ENHDAGPDGDKREDDAESGGRRSEAEEGEVRTPTKIKELKPEQETTPRHKQEFLDKPE. Thr475 is modified (phosphothreonine). Residues 483–541 are spectrin--actin-binding; sequence KPEQETTPRHKQEFLDKPEDVLLKHQASINELKRTLKEPNSKLIHRDRDWERERRLPSS. The residue at position 510 (Ser510) is a Phosphoserine. Residues 514–538 show a composition bias toward basic and acidic residues; sequence LKRTLKEPNSKLIHRDRDWERERRL. 3 disordered regions span residues 514–596, 633–687, and 718–742; these read LKRT…FLKD, FEDF…STPE, and SRVS…MTTP. Ser540, Ser541, Ser544, and Ser546 each carry phosphoserine. Residue Thr550 is modified to Phosphothreonine. The span at 550–577 shows a compositional bias: basic and acidic residues; that stretch reads TPEKASERAGLREGSEEKVKPPRPRAPE. 2 positions are modified to phosphoserine: Ser564 and Ser578. Thr580 carries the post-translational modification Phosphothreonine. Residues Glu583, Gln587, Ser639, Ser648, Ser650, Ser665, Ser666, Asp669, Ser671, Ser677, and Ser684 each carry the phosphoserine modification. Residues 635–650 show a composition bias toward basic and acidic residues; it reads DFSRSLPELDRDKSDS. Thr685 is subject to Phosphothreonine. Residues 718 to 728 show a composition bias toward polar residues; the sequence is SRVSTADSTQV. A phosphoserine mark is found at Ser721, Pro742, Ala766, Ser782, and Ser868. The C-terminal (CTD) stretch occupies residues 744 to 879; the sequence is CITTETISTT…EERDKKPQES (136 aa).

Interacts with AGAP2. In terms of tissue distribution, highest expression in brain, lower in heart and kidney. Within the brain, highest expression in cerebellum.

It is found in the cytoplasm. It localises to the cytoskeleton. Functionally, may function to confer stability and plasticity to neuronal membrane via multiple interactions, including the spectrin-actin-based cytoskeleton, integral membrane channels and membrane-associated guanylate kinases. This Rattus norvegicus (Rat) protein is Band 4.1-like protein 1.